The sequence spans 211 residues: Probable GTP-binding protein EngB (211 aa).

Residues 22-195 enclose the EngB-type G domain; the sequence is PFPEVAFAGK…WQLIDSYVLP (174 aa). GTP is bound by residues 30–37, 57–61, 75–78, 142–145, and 174–176; these read GKSNVGKS, GKTQT, DLPG, TKLD, and FSS. Residues S37 and T59 each contribute to the Mg(2+) site.

The protein belongs to the TRAFAC class TrmE-Era-EngA-EngB-Septin-like GTPase superfamily. EngB GTPase family. The cofactor is Mg(2+).

Functionally, necessary for normal cell division and for the maintenance of normal septation. This is Probable GTP-binding protein EngB from Lachnospira eligens (strain ATCC 27750 / DSM 3376 / VPI C15-48 / C15-B4) (Eubacterium eligens).